A 200-amino-acid chain; its full sequence is Small ribosomal subunit protein eS1 (200 aa).

Belongs to the eukaryotic ribosomal protein eS1 family.

This chain is Small ribosomal subunit protein eS1, found in Thermococcus gammatolerans (strain DSM 15229 / JCM 11827 / EJ3).